The sequence spans 231 residues: NADH-ubiquinone oxidoreductase chain 4 (231 aa).

6 consecutive transmembrane segments (helical) span residues Pro-1 to Ile-21, Met-34 to Leu-54, Leu-62 to Trp-84, Ala-89 to Tyr-111, Ile-128 to Pro-148, and Thr-169 to Leu-189.

This sequence belongs to the complex I subunit 4 family.

It localises to the mitochondrion membrane. The catalysed reaction is a ubiquinone + NADH + 5 H(+)(in) = a ubiquinol + NAD(+) + 4 H(+)(out). Its function is as follows. Core subunit of the mitochondrial membrane respiratory chain NADH dehydrogenase (Complex I) that is believed to belong to the minimal assembly required for catalysis. Complex I functions in the transfer of electrons from NADH to the respiratory chain. The immediate electron acceptor for the enzyme is believed to be ubiquinone. This Bothrops erythromelas (Caatinga lance head) protein is NADH-ubiquinone oxidoreductase chain 4 (MT-ND4).